Here is a 109-residue protein sequence, read N- to C-terminus: Nucleoid-associated protein SO_2014 (109 aa).

Belongs to the YbaB/EbfC family. Homodimer.

The protein resides in the cytoplasm. Its subcellular location is the nucleoid. Functionally, binds to DNA and alters its conformation. May be involved in regulation of gene expression, nucleoid organization and DNA protection. The chain is Nucleoid-associated protein SO_2014 from Shewanella oneidensis (strain ATCC 700550 / JCM 31522 / CIP 106686 / LMG 19005 / NCIMB 14063 / MR-1).